The following is a 145-amino-acid chain: Peptide methionine sulfoxide reductase MsrB (145 aa).

Residues 6 to 129 (KNERLKQLTD…NSAALRFIPV (124 aa)) form the MsrB domain. C118 (nucleophile) is an active-site residue.

The protein belongs to the MsrB Met sulfoxide reductase family.

The enzyme catalyses L-methionyl-[protein] + [thioredoxin]-disulfide + H2O = L-methionyl-(R)-S-oxide-[protein] + [thioredoxin]-dithiol. This chain is Peptide methionine sulfoxide reductase MsrB, found in Listeria welshimeri serovar 6b (strain ATCC 35897 / DSM 20650 / CCUG 15529 / CIP 8149 / NCTC 11857 / SLCC 5334 / V8).